The chain runs to 345 residues: Phosphoribosylformylglycinamidine cyclo-ligase (345 aa).

The protein belongs to the AIR synthase family.

Its subcellular location is the cytoplasm. The enzyme catalyses 2-formamido-N(1)-(5-O-phospho-beta-D-ribosyl)acetamidine + ATP = 5-amino-1-(5-phospho-beta-D-ribosyl)imidazole + ADP + phosphate + H(+). It participates in purine metabolism; IMP biosynthesis via de novo pathway; 5-amino-1-(5-phospho-D-ribosyl)imidazole from N(2)-formyl-N(1)-(5-phospho-D-ribosyl)glycinamide: step 2/2. This is Phosphoribosylformylglycinamidine cyclo-ligase from Escherichia coli (strain K12 / MC4100 / BW2952).